A 158-amino-acid polypeptide reads, in one-letter code: Disulfide bond formation protein B (158 aa).

Residues 1–7 (MKNSRPV) are Cytoplasmic-facing. A helical membrane pass occupies residues 8 to 24 (LFAVALASLLLLAVALY). The Periplasmic portion of the chain corresponds to 25–42 (LQHVENMLPCPLCVIQRY). Cys34 and Cys37 form a disulfide bridge. The chain crosses the membrane as a helical span at residues 43-57 (AFAAIALICLVTAFR). Topologically, residues 58–63 (TEVTAR) are cytoplasmic. The helical transmembrane segment at 64–81 (IGAALAALASLAGAGVAG) threads the bilayer. Over 82-136 (WHIYIKAHPTVSCGIDPLETSLNTIPTAKLLPFLLQADGLCTTEYAPIMGLSIPQ) the chain is Periplasmic. A disulfide bridge links Cys94 with Cys122. Residues 137–155 (WALVWFIVIALFLLHTAFR) traverse the membrane as a helical segment. The Cytoplasmic portion of the chain corresponds to 156-158 (KKS).

It belongs to the DsbB family.

It localises to the cell inner membrane. In terms of biological role, required for disulfide bond formation in some periplasmic proteins. Acts by oxidizing the DsbA protein. This is Disulfide bond formation protein B from Herminiimonas arsenicoxydans.